The following is a 349-amino-acid chain: Protein-glutamate methylesterase/protein-glutamine glutaminase (349 aa).

Residues 5 to 122 form the Response regulatory domain; it reads RVLCVDDSAL…REGMLAYSEL (118 aa). D56 carries the post-translational modification 4-aspartylphosphate. In terms of domain architecture, CheB-type methylesterase spans 152–344; that stretch reads LLSSEKLIAI…QRMLAQISSG (193 aa). Active-site residues include S164, H190, and D286.

The protein belongs to the CheB family. In terms of processing, phosphorylated by CheA. Phosphorylation of the N-terminal regulatory domain activates the methylesterase activity.

It is found in the cytoplasm. It catalyses the reaction [protein]-L-glutamate 5-O-methyl ester + H2O = L-glutamyl-[protein] + methanol + H(+). The enzyme catalyses L-glutaminyl-[protein] + H2O = L-glutamyl-[protein] + NH4(+). Involved in chemotaxis. Part of a chemotaxis signal transduction system that modulates chemotaxis in response to various stimuli. Catalyzes the demethylation of specific methylglutamate residues introduced into the chemoreceptors (methyl-accepting chemotaxis proteins or MCP) by CheR. Also mediates the irreversible deamidation of specific glutamine residues to glutamic acid. This Yersinia pestis bv. Antiqua (strain Antiqua) protein is Protein-glutamate methylesterase/protein-glutamine glutaminase.